The chain runs to 499 residues: WD repeat-containing protein 55 homolog (499 aa).

The interval M1–D130 is disordered. Composition is skewed to acidic residues over residues D12–M23 and I31–L48. The span at D91–S103 shows a compositional bias: low complexity. The span at P113–A122 shows a compositional bias: polar residues. WD repeat units lie at residues K154–L193, V198–L237, A241–E279, E282–Q321, P324–D363, and Q408–D447. Residues T480–A499 form a disordered region.

It belongs to the WD repeat WDR55 family.

This chain is WD repeat-containing protein 55 homolog, found in Drosophila yakuba (Fruit fly).